The sequence spans 95 residues: Aspartyl/glutamyl-tRNA(Asn/Gln) amidotransferase subunit C (95 aa).

This sequence belongs to the GatC family. In terms of assembly, heterotrimer of A, B and C subunits.

It carries out the reaction L-glutamyl-tRNA(Gln) + L-glutamine + ATP + H2O = L-glutaminyl-tRNA(Gln) + L-glutamate + ADP + phosphate + H(+). It catalyses the reaction L-aspartyl-tRNA(Asn) + L-glutamine + ATP + H2O = L-asparaginyl-tRNA(Asn) + L-glutamate + ADP + phosphate + 2 H(+). Functionally, allows the formation of correctly charged Asn-tRNA(Asn) or Gln-tRNA(Gln) through the transamidation of misacylated Asp-tRNA(Asn) or Glu-tRNA(Gln) in organisms which lack either or both of asparaginyl-tRNA or glutaminyl-tRNA synthetases. The reaction takes place in the presence of glutamine and ATP through an activated phospho-Asp-tRNA(Asn) or phospho-Glu-tRNA(Gln). This Nitrosococcus oceani (strain ATCC 19707 / BCRC 17464 / JCM 30415 / NCIMB 11848 / C-107) protein is Aspartyl/glutamyl-tRNA(Asn/Gln) amidotransferase subunit C.